Reading from the N-terminus, the 154-residue chain is Ribosome maturation factor RimP (154 aa).

The protein belongs to the RimP family.

It is found in the cytoplasm. Required for maturation of 30S ribosomal subunits. This chain is Ribosome maturation factor RimP, found in Yersinia pseudotuberculosis serotype O:1b (strain IP 31758).